A 207-amino-acid chain; its full sequence is Hydrogenase expression/formation protein HoxM (207 aa).

Residues Glu-19, Asp-65, and His-96 each contribute to the Ni(2+) site.

This sequence belongs to the peptidase A31 family.

In terms of biological role, not known. Could be involved in the processing of hydrogenase. The polypeptide is Hydrogenase expression/formation protein HoxM (hoxM) (Azotobacter vinelandii).